Consider the following 90-residue polypeptide: MVVLNKSEAHDRSRKLELLSIRINIFGLQLNIIINLIPLVLLFAFFCPCIYFLHTFLADCEIAKSTCITSVFNCLIFHMPNLSGDWNITV.

The chain crosses the membrane as a helical span at residues 32–52; the sequence is IIINLIPLVLLFAFFCPCIYF.

Its subcellular location is the membrane. This is an uncharacterized protein from Schizosaccharomyces pombe (strain 972 / ATCC 24843) (Fission yeast).